We begin with the raw amino-acid sequence, 215 residues long: Small ribosomal subunit protein uS3 (215 aa).

A KH type-2 domain is found at 39–107 (VRQYLQKKLA…PVHINIEEIR (69 aa)).

It belongs to the universal ribosomal protein uS3 family. In terms of assembly, part of the 30S ribosomal subunit. Forms a tight complex with proteins S10 and S14.

In terms of biological role, binds the lower part of the 30S subunit head. Binds mRNA in the 70S ribosome, positioning it for translation. The polypeptide is Small ribosomal subunit protein uS3 (Nitrosomonas europaea (strain ATCC 19718 / CIP 103999 / KCTC 2705 / NBRC 14298)).